The chain runs to 145 residues: D-aminoacyl-tRNA deacylase (145 aa).

A Gly-cisPro motif, important for rejection of L-amino acids motif is present at residues 137-138 (GP).

This sequence belongs to the DTD family. As to quaternary structure, homodimer.

It is found in the cytoplasm. The catalysed reaction is glycyl-tRNA(Ala) + H2O = tRNA(Ala) + glycine + H(+). It catalyses the reaction a D-aminoacyl-tRNA + H2O = a tRNA + a D-alpha-amino acid + H(+). In terms of biological role, an aminoacyl-tRNA editing enzyme that deacylates mischarged D-aminoacyl-tRNAs. Also deacylates mischarged glycyl-tRNA(Ala), protecting cells against glycine mischarging by AlaRS. Acts via tRNA-based rather than protein-based catalysis; rejects L-amino acids rather than detecting D-amino acids in the active site. By recycling D-aminoacyl-tRNA to D-amino acids and free tRNA molecules, this enzyme counteracts the toxicity associated with the formation of D-aminoacyl-tRNA entities in vivo and helps enforce protein L-homochirality. The chain is D-aminoacyl-tRNA deacylase from Shewanella baltica (strain OS195).